A 250-amino-acid chain; its full sequence is 3-deoxy-manno-octulosonate cytidylyltransferase (250 aa).

This sequence belongs to the KdsB family.

The protein localises to the cytoplasm. It catalyses the reaction 3-deoxy-alpha-D-manno-oct-2-ulosonate + CTP = CMP-3-deoxy-beta-D-manno-octulosonate + diphosphate. The protein operates within nucleotide-sugar biosynthesis; CMP-3-deoxy-D-manno-octulosonate biosynthesis; CMP-3-deoxy-D-manno-octulosonate from 3-deoxy-D-manno-octulosonate and CTP: step 1/1. It functions in the pathway bacterial outer membrane biogenesis; lipopolysaccharide biosynthesis. Its function is as follows. Activates KDO (a required 8-carbon sugar) for incorporation into bacterial lipopolysaccharide in Gram-negative bacteria. This is 3-deoxy-manno-octulosonate cytidylyltransferase from Azorhizobium caulinodans (strain ATCC 43989 / DSM 5975 / JCM 20966 / LMG 6465 / NBRC 14845 / NCIMB 13405 / ORS 571).